The chain runs to 296 residues: Sulfate adenylyltransferase subunit 2 (296 aa).

Belongs to the PAPS reductase family. CysD subfamily. In terms of assembly, heterodimer composed of CysD, the smaller subunit, and CysN.

It catalyses the reaction sulfate + ATP + H(+) = adenosine 5'-phosphosulfate + diphosphate. Its pathway is sulfur metabolism; hydrogen sulfide biosynthesis; sulfite from sulfate: step 1/3. With CysN forms the ATP sulfurylase (ATPS) that catalyzes the adenylation of sulfate producing adenosine 5'-phosphosulfate (APS) and diphosphate, the first enzymatic step in sulfur assimilation pathway. APS synthesis involves the formation of a high-energy phosphoric-sulfuric acid anhydride bond driven by GTP hydrolysis by CysN coupled to ATP hydrolysis by CysD. This is Sulfate adenylyltransferase subunit 2 from Rhodospirillum rubrum (strain ATCC 11170 / ATH 1.1.1 / DSM 467 / LMG 4362 / NCIMB 8255 / S1).